The sequence spans 107 residues: IQ domain-containing protein F6 (107 aa).

Residues 42–71 (QEWAVVKVQAQVRMWQARRRFLQARQAACI) form the IQ domain.

In Homo sapiens (Human), this protein is IQ domain-containing protein F6 (IQCF6).